The following is a 463-amino-acid chain: L-seryl-tRNA(Sec) selenium transferase (463 aa).

The residue at position 295 (Lys295) is an N6-(pyridoxal phosphate)lysine.

This sequence belongs to the SelA family. As to quaternary structure, homodecamer; pentamer of dimers. Binds only one seryl-tRNA(Sec) per dimer. Pyridoxal 5'-phosphate serves as cofactor.

The protein localises to the cytoplasm. The enzyme catalyses L-seryl-tRNA(Sec) + selenophosphate + H(+) = L-selenocysteinyl-tRNA(Sec) + phosphate. It participates in aminoacyl-tRNA biosynthesis; selenocysteinyl-tRNA(Sec) biosynthesis; selenocysteinyl-tRNA(Sec) from L-seryl-tRNA(Sec) (bacterial route): step 1/1. In terms of biological role, converts seryl-tRNA(Sec) to selenocysteinyl-tRNA(Sec) required for selenoprotein biosynthesis. The polypeptide is L-seryl-tRNA(Sec) selenium transferase (Escherichia coli (strain SMS-3-5 / SECEC)).